Consider the following 76-residue polypeptide: Exodeoxyribonuclease 7 small subunit (76 aa).

Belongs to the XseB family. In terms of assembly, heterooligomer composed of large and small subunits.

Its subcellular location is the cytoplasm. The catalysed reaction is Exonucleolytic cleavage in either 5'- to 3'- or 3'- to 5'-direction to yield nucleoside 5'-phosphates.. Bidirectionally degrades single-stranded DNA into large acid-insoluble oligonucleotides, which are then degraded further into small acid-soluble oligonucleotides. The sequence is that of Exodeoxyribonuclease 7 small subunit from Gluconacetobacter diazotrophicus (strain ATCC 49037 / DSM 5601 / CCUG 37298 / CIP 103539 / LMG 7603 / PAl5).